The primary structure comprises 270 residues: Putative pyruvate, phosphate dikinase regulatory protein 1 (270 aa).

151–158 (GVSRTSKT) lines the ADP pocket.

This sequence belongs to the pyruvate, phosphate/water dikinase regulatory protein family. PDRP subfamily.

The enzyme catalyses N(tele)-phospho-L-histidyl/L-threonyl-[pyruvate, phosphate dikinase] + ADP = N(tele)-phospho-L-histidyl/O-phospho-L-threonyl-[pyruvate, phosphate dikinase] + AMP + H(+). The catalysed reaction is N(tele)-phospho-L-histidyl/O-phospho-L-threonyl-[pyruvate, phosphate dikinase] + phosphate + H(+) = N(tele)-phospho-L-histidyl/L-threonyl-[pyruvate, phosphate dikinase] + diphosphate. Functionally, bifunctional serine/threonine kinase and phosphorylase involved in the regulation of the pyruvate, phosphate dikinase (PPDK) by catalyzing its phosphorylation/dephosphorylation. The chain is Putative pyruvate, phosphate dikinase regulatory protein 1 from Enterococcus faecalis (strain ATCC 700802 / V583).